We begin with the raw amino-acid sequence, 447 residues long: Putative FBD-associated F-box protein At1g61330 (447 aa).

In terms of domain architecture, F-box spans 10–57 (KLIKRLSDELVECILSFLPVQSTLQHRVLSKRYRDTWKLSRDLDFSGI). Positions 384 to 416 (VKIIGYKGHWHELDIVEFFVKNAPSLKRLELQM) constitute an FBD domain.

The polypeptide is Putative FBD-associated F-box protein At1g61330 (Arabidopsis thaliana (Mouse-ear cress)).